The sequence spans 240 residues: Tumor protein p53-inducible nuclear protein 1 (240 aa).

Residues 25–37 (EKEDDEWILVDFI) carry the LIR motif.

In terms of assembly, interacts with p53/TP53 and HIPK2. Interacts with PRKCG, GABARAP, GABARAPL1, GABARAPL2, MAP1LC3A, MAP1LC3B and MAP1LC3C. As to expression, ubiquitously expressed.

The protein resides in the cytoplasm. It localises to the cytosol. Its subcellular location is the nucleus. The protein localises to the PML body. It is found in the cytoplasmic vesicle. The protein resides in the autophagosome. In terms of biological role, antiproliferative and proapoptotic protein involved in cell stress response which acts as a dual regulator of transcription and autophagy. Acts as a positive regulator of autophagy. In response to cellular stress or activation of autophagy, relocates to autophagosomes where it interacts with autophagosome-associated proteins GABARAP, GABARAPL1/L2, MAP1LC3A/B/C and regulates autophagy. Acts as an antioxidant and plays a major role in p53/TP53-driven oxidative stress response. Possesses both a p53/TP53-independent intracellular reactive oxygen species (ROS) regulatory function and a p53/TP53-dependent transcription regulatory function. Positively regulates p53/TP53 and p73/TP73 and stimulates their capacity to induce apoptosis and regulate cell cycle. In response to double-strand DNA breaks, promotes p53/TP53 phosphorylation on 'Ser-46' and subsequent apoptosis. Acts as a tumor suppressor by inducing cell death by an autophagy and caspase-dependent mechanism. Can reduce cell migration by regulating the expression of SPARC. The sequence is that of Tumor protein p53-inducible nuclear protein 1 (TP53INP1) from Homo sapiens (Human).